The primary structure comprises 215 residues: Hibernation-associated plasma protein HP-27 (215 aa).

An N-terminal signal peptide occupies residues 1–30 (MYEAGKRASFMGGAGIWILALSVLMHVVCS). The interval 34-79 (GNPESCNVPGPQGPPGMRGPPGTPGKPGPPGWNGFPGLPGPPGPPG) is disordered. The region spanning 43-81 (GPQGPPGMRGPPGTPGKPGPPGWNGFPGLPGPPGPPGMT) is the Collagen-like domain. The span at 44-63 (PQGPPGMRGPPGTPGKPGPP) shows a compositional bias: pro residues. One can recognise a C1q domain in the interval 85-215 (HSKGTSAFAV…VFSGFLIHEN (131 aa)). A glycan (N-linked (GlcNAc...) asparagine) is linked at asparagine 155.

Plasma; synthesized in the liver.

It localises to the secreted. Its function is as follows. Plasma proteins HP-20, HP-25, HP-27 and HP-55 form a 140 kDa complex via disulfide bonds in the plasma and are hibernation specific. This chain is Hibernation-associated plasma protein HP-27, found in Tamias sibiricus (Siberian chipmunk).